Here is a 497-residue protein sequence, read N- to C-terminus: Vacuolar fusion protein CCZ1 homolog B (497 aa).

The interval 244 to 284 (GTSSWSYLRKGSGSPQISSRSTTVPPLGSGGTLPSGNGSST) is disordered.

Belongs to the CCZ1 family. In terms of assembly, interacts with MON1.

It is found in the endosome. It localises to the prevacuolar compartment. Functionally, plays an important role in membrane trafficking through the secretory apparatus. In complex with MON1, acts as a guanine exchange factor (GEF) for RABG3F of the RAB7 protein family. Promotes the exchange of GDP to GTP, converting RABG3F from an inactive GDP-bound form into an active GTP-bound form. The RABG3F active form is involved in protein trafficking from prevacuolar compartments (PVCs) to vacuoles. May serve as a linker between Rab5 and Rab7 protein families in PVCs and mediate PVC maturation. In Arabidopsis thaliana (Mouse-ear cress), this protein is Vacuolar fusion protein CCZ1 homolog B.